The following is a 382-amino-acid chain: Chaperone protein DnaJ (382 aa).

Residues 5 to 70 (DYYEVLGVSR…DKKAAYDRYG (66 aa)) form the J domain. The segment at 141 to 219 (GVQKTINVPA…CHGAGRVEKE (79 aa)) adopts a CR-type zinc-finger fold. Residues C154, C157, C171, C174, C193, C196, C207, and C210 each contribute to the Zn(2+) site. 4 CXXCXGXG motif repeats span residues 154–161 (CDSCKGTG), 171–178 (CPTCSGMG), 193–200 (CPTCNGMG), and 207–214 (CKSCHGAG).

This sequence belongs to the DnaJ family. Homodimer. Requires Zn(2+) as cofactor.

It localises to the cytoplasm. Its function is as follows. Participates actively in the response to hyperosmotic and heat shock by preventing the aggregation of stress-denatured proteins and by disaggregating proteins, also in an autonomous, DnaK-independent fashion. Unfolded proteins bind initially to DnaJ; upon interaction with the DnaJ-bound protein, DnaK hydrolyzes its bound ATP, resulting in the formation of a stable complex. GrpE releases ADP from DnaK; ATP binding to DnaK triggers the release of the substrate protein, thus completing the reaction cycle. Several rounds of ATP-dependent interactions between DnaJ, DnaK and GrpE are required for fully efficient folding. Also involved, together with DnaK and GrpE, in the DNA replication of plasmids through activation of initiation proteins. This Cereibacter sphaeroides (strain ATCC 17025 / ATH 2.4.3) (Rhodobacter sphaeroides) protein is Chaperone protein DnaJ.